Here is a 303-residue protein sequence, read N- to C-terminus: Agmatinase (303 aa).

Residues His-126, Asp-149, His-151, Asp-153, Asp-230, and Asp-232 each coordinate Mn(2+).

It belongs to the arginase family. Agmatinase subfamily. Mn(2+) serves as cofactor.

It catalyses the reaction agmatine + H2O = urea + putrescine. In terms of biological role, catalyzes the formation of putrescine from agmatine. This Blochmanniella floridana protein is Agmatinase (speB).